The primary structure comprises 66 residues: Ornithorhynchus venom defensin-like peptide A (66 aa).

Residues 1 to 22 (MRLTYLLLLLVAVLFQAGSGSA) form the signal peptide. A propeptide spanning residues 23 to 24 (EP) is cleaved from the precursor. Cystine bridges form between Cys-33–Cys-63, Cys-40–Cys-56, and Cys-48–Cys-64.

Produced by the crural gland and detected in venom from the spur located on each male hind leg. Is the only OvDLP that is expressed in venom gland alone.

It is found in the secreted. In terms of biological role, does not show antimicrobial, myotoxic, hemolytic and cell-promoting activities. This is Ornithorhynchus venom defensin-like peptide A from Ornithorhynchus anatinus (Duckbill platypus).